The sequence spans 299 residues: Probable lipid kinase YegS-like (299 aa).

In terms of domain architecture, DAGKc spans 2–133; the sequence is ATYPESLLIL…VDIAQVNDKT (132 aa). ATP-binding positions include Thr40, 66 to 72, and Thr95; that span reads GDGTINE. Positions 215, 218, and 220 each coordinate Mg(2+). The active-site Proton acceptor is Glu271.

This sequence belongs to the diacylglycerol/lipid kinase family. YegS lipid kinase subfamily. Mg(2+) serves as cofactor. Requires Ca(2+) as cofactor.

The protein resides in the cytoplasm. In terms of biological role, probably phosphorylates lipids; the in vivo substrate is unknown. The protein is Probable lipid kinase YegS-like of Enterobacter sp. (strain 638).